Consider the following 156-residue polypeptide: Small ribosomal subunit protein uS7 (156 aa).

It belongs to the universal ribosomal protein uS7 family. Part of the 30S ribosomal subunit. Contacts proteins S9 and S11.

Functionally, one of the primary rRNA binding proteins, it binds directly to 16S rRNA where it nucleates assembly of the head domain of the 30S subunit. Is located at the subunit interface close to the decoding center, probably blocks exit of the E-site tRNA. The protein is Small ribosomal subunit protein uS7 of Caldanaerobacter subterraneus subsp. tengcongensis (strain DSM 15242 / JCM 11007 / NBRC 100824 / MB4) (Thermoanaerobacter tengcongensis).